We begin with the raw amino-acid sequence, 476 residues long: Bifunctional protein HldE (476 aa).

Residues 1–320 (MQNPHIPSFA…RAVHQEGGSG (320 aa)) are ribokinase. 196-199 (NLSE) is an ATP binding site. The active site involves aspartate 265. Residues 345-476 (FTNGCFDIIH…KIVERIREKD (132 aa)) are cytidylyltransferase.

This sequence in the N-terminal section; belongs to the carbohydrate kinase PfkB family. In the C-terminal section; belongs to the cytidylyltransferase family. Homodimer.

It carries out the reaction D-glycero-beta-D-manno-heptose 7-phosphate + ATP = D-glycero-beta-D-manno-heptose 1,7-bisphosphate + ADP + H(+). The enzyme catalyses D-glycero-beta-D-manno-heptose 1-phosphate + ATP + H(+) = ADP-D-glycero-beta-D-manno-heptose + diphosphate. Its pathway is nucleotide-sugar biosynthesis; ADP-L-glycero-beta-D-manno-heptose biosynthesis; ADP-L-glycero-beta-D-manno-heptose from D-glycero-beta-D-manno-heptose 7-phosphate: step 1/4. The protein operates within nucleotide-sugar biosynthesis; ADP-L-glycero-beta-D-manno-heptose biosynthesis; ADP-L-glycero-beta-D-manno-heptose from D-glycero-beta-D-manno-heptose 7-phosphate: step 3/4. Catalyzes the phosphorylation of D-glycero-D-manno-heptose 7-phosphate at the C-1 position to selectively form D-glycero-beta-D-manno-heptose-1,7-bisphosphate. Functionally, catalyzes the ADP transfer from ATP to D-glycero-beta-D-manno-heptose 1-phosphate, yielding ADP-D-glycero-beta-D-manno-heptose. This is Bifunctional protein HldE from Alcanivorax borkumensis (strain ATCC 700651 / DSM 11573 / NCIMB 13689 / SK2).